A 232-amino-acid chain; its full sequence is Uracil-DNA glycosylase (232 aa).

The active-site Proton acceptor is the aspartate 70.

Belongs to the uracil-DNA glycosylase (UDG) superfamily. UNG family.

The protein resides in the cytoplasm. It catalyses the reaction Hydrolyzes single-stranded DNA or mismatched double-stranded DNA and polynucleotides, releasing free uracil.. Functionally, excises uracil residues from the DNA which can arise as a result of misincorporation of dUMP residues by DNA polymerase or due to deamination of cytosine. The sequence is that of Uracil-DNA glycosylase from Campylobacter fetus subsp. fetus (strain 82-40).